A 301-amino-acid polypeptide reads, in one-letter code: Ribonuclease Z (301 aa).

Zn(2+) contacts are provided by H63, H65, D67, H68, H141, D204, and H262. D67 functions as the Proton acceptor in the catalytic mechanism.

The protein belongs to the RNase Z family. Homodimer. Zn(2+) serves as cofactor.

The catalysed reaction is Endonucleolytic cleavage of RNA, removing extra 3' nucleotides from tRNA precursor, generating 3' termini of tRNAs. A 3'-hydroxy group is left at the tRNA terminus and a 5'-phosphoryl group is left at the trailer molecule.. Functionally, zinc phosphodiesterase, which displays some tRNA 3'-processing endonuclease activity. Probably involved in tRNA maturation, by removing a 3'-trailer from precursor tRNA. In Streptomyces avermitilis (strain ATCC 31267 / DSM 46492 / JCM 5070 / NBRC 14893 / NCIMB 12804 / NRRL 8165 / MA-4680), this protein is Ribonuclease Z.